Here is a 235-residue protein sequence, read N- to C-terminus: MEKIYTWLKTNSYIVHHVSTSLNIISFIIVLIWIFESTIKEKLNIIFTVNLEAIVVFISILIVGLNQLLQKLLIEAEYSPAFALAVGYFKNFIFPAITQIKENGEVNPKICIYKPKHFDELTSTNIDMIKAELTNKKYNLSEINLSLKGARARDILTLNKKSKIHSYFDFPNTLLSLYSYVDFKIASSNNNSSELKKKKFVELLIEQFYLKLNELIQENNLTNNITFCDKNLQGL.

Helical transmembrane passes span 14–34 and 45–65; these read IVHH…LIWI and IIFT…IVGL.

It in the C-terminal section; belongs to the bacterial STING family. In terms of assembly, homodimer.

Its subcellular location is the cell inner membrane. Its function is as follows. Effector protein of a CBASS antivirus system. CBASS (cyclic oligonucleotide-based antiphage signaling system) provides immunity against bacteriophage. The CD-NTase protein synthesizes cyclic nucleotides in response to infection; these serve as specific second messenger signals. The signals activate a diverse range of effectors, leading to bacterial cell death and thus abortive phage infection. A type I-D(GG) CBASS system. Binds cyclic dinucleotides: binds c-di-GMP (synthesized by the cognate CdnE encoded upstream in the same operon), cyclic 3'3'-cyclic GMP-AMP (3'3'-cGAMP) but not cUMP-AMP. The effector protein for this CBASS system, its activity is stimulated by c-di-GMP and leads to cell death. The chain is CD-NTase-associated protein 13 from Flavobacteriaceae sp. genome_bin_11.